Consider the following 323-residue polypeptide: tRNA U34 carboxymethyltransferase (323 aa).

Carboxy-S-adenosyl-L-methionine is bound by residues K91, W105, K110, G130, 181-182 (IE), M196, Y200, and R315.

The protein belongs to the class I-like SAM-binding methyltransferase superfamily. CmoB family. As to quaternary structure, homotetramer.

The catalysed reaction is carboxy-S-adenosyl-L-methionine + 5-hydroxyuridine(34) in tRNA = 5-carboxymethoxyuridine(34) in tRNA + S-adenosyl-L-homocysteine + H(+). Its function is as follows. Catalyzes carboxymethyl transfer from carboxy-S-adenosyl-L-methionine (Cx-SAM) to 5-hydroxyuridine (ho5U) to form 5-carboxymethoxyuridine (cmo5U) at position 34 in tRNAs. This Edwardsiella ictaluri (strain 93-146) protein is tRNA U34 carboxymethyltransferase.